The chain runs to 391 residues: Carbamoyl phosphate synthase small chain (391 aa).

The tract at residues 1-202 (MTQPAILVLE…AHASAGSGEE (202 aa)) is CPSase. Residues Ser47, Gly254, and Gly256 each contribute to the L-glutamine site. The Glutamine amidotransferase type-1 domain maps to 206-391 (KVVAYDYGVK…RFVDLMAARA (186 aa)). Cys282 acts as the Nucleophile in catalysis. Residues Leu283, Gln286, Asn324, Gly326, and Phe327 each contribute to the L-glutamine site. Residues His366 and Glu368 contribute to the active site.

It belongs to the CarA family. Composed of two chains; the small (or glutamine) chain promotes the hydrolysis of glutamine to ammonia, which is used by the large (or ammonia) chain to synthesize carbamoyl phosphate. Tetramer of heterodimers (alpha,beta)4.

It carries out the reaction hydrogencarbonate + L-glutamine + 2 ATP + H2O = carbamoyl phosphate + L-glutamate + 2 ADP + phosphate + 2 H(+). The enzyme catalyses L-glutamine + H2O = L-glutamate + NH4(+). It participates in amino-acid biosynthesis; L-arginine biosynthesis; carbamoyl phosphate from bicarbonate: step 1/1. The protein operates within pyrimidine metabolism; UMP biosynthesis via de novo pathway; (S)-dihydroorotate from bicarbonate: step 1/3. Its function is as follows. Small subunit of the glutamine-dependent carbamoyl phosphate synthetase (CPSase). CPSase catalyzes the formation of carbamoyl phosphate from the ammonia moiety of glutamine, carbonate, and phosphate donated by ATP, constituting the first step of 2 biosynthetic pathways, one leading to arginine and/or urea and the other to pyrimidine nucleotides. The small subunit (glutamine amidotransferase) binds and cleaves glutamine to supply the large subunit with the substrate ammonia. This is Carbamoyl phosphate synthase small chain from Xanthomonas axonopodis pv. citri (strain 306).